The following is a 432-amino-acid chain: Enolase (432 aa).

Gln167 contacts (2R)-2-phosphoglycerate. Glu209 serves as the catalytic Proton donor. The Mg(2+) site is built by Asp246, Glu289, and Asp316. Positions 341, 370, 371, and 392 each coordinate (2R)-2-phosphoglycerate. Catalysis depends on Lys341, which acts as the Proton acceptor.

It belongs to the enolase family. It depends on Mg(2+) as a cofactor.

Its subcellular location is the cytoplasm. The protein resides in the secreted. It localises to the cell surface. The enzyme catalyses (2R)-2-phosphoglycerate = phosphoenolpyruvate + H2O. It functions in the pathway carbohydrate degradation; glycolysis; pyruvate from D-glyceraldehyde 3-phosphate: step 4/5. Its function is as follows. Catalyzes the reversible conversion of 2-phosphoglycerate (2-PG) into phosphoenolpyruvate (PEP). It is essential for the degradation of carbohydrates via glycolysis. The protein is Enolase of Thermotoga neapolitana (strain ATCC 49049 / DSM 4359 / NBRC 107923 / NS-E).